Consider the following 196-residue polypeptide: Large ribosomal subunit protein uL18 (196 aa).

It belongs to the universal ribosomal protein uL18 family. Part of the 50S ribosomal subunit. Contacts the 5S and 23S rRNAs.

Its function is as follows. This is one of the proteins that bind and probably mediate the attachment of the 5S RNA into the large ribosomal subunit, where it forms part of the central protuberance. This Sulfurisphaera tokodaii (strain DSM 16993 / JCM 10545 / NBRC 100140 / 7) (Sulfolobus tokodaii) protein is Large ribosomal subunit protein uL18.